The sequence spans 860 residues: Rod cGMP-specific 3',5'-cyclic phosphodiesterase subunit alpha (860 aa).

The residue at position 2 (G2) is an N-acetylglycine. GAF domains follow at residues 73–222 (QTEK…NLIM) and 254–431 (DIER…GWSV). The PDEase domain occupies 483-816 (EEEELAEILQ…KEWKALADEY (334 aa)). H559 (proton donor) is an active-site residue. The a divalent metal cation site is built by H563, H599, D600, and D720. Residues 821-860 (KVQEEKKQKQQSAKSAAAGNQPGGNPSPGGATTSKSCCIQ) are disordered. Over residues 830–851 (QQSAKSAAAGNQPGGNPSPGGA) the composition is skewed to low complexity. At C857 the chain carries Cysteine methyl ester. C857 carries the S-farnesyl cysteine lipid modification. The propeptide at 858 to 860 (CIQ) is removed in mature form.

It belongs to the cyclic nucleotide phosphodiesterase family. As to quaternary structure, oligomer composed of two catalytic chains (alpha and beta), an inhibitory chain (gamma) and the delta chain. The cofactor is a divalent metal cation.

It localises to the cell membrane. The protein localises to the cell projection. Its subcellular location is the cilium. It is found in the photoreceptor outer segment. It carries out the reaction 3',5'-cyclic GMP + H2O = GMP + H(+). Rod-specific cGMP phosphodiesterase that catalyzes the hydrolysis of 3',5'-cyclic GMP. This protein participates in processes of transmission and amplification of the visual signal. In Homo sapiens (Human), this protein is Rod cGMP-specific 3',5'-cyclic phosphodiesterase subunit alpha.